A 378-amino-acid polypeptide reads, in one-letter code: Outer membrane protein (378 aa).

A signal peptide spans 1 to 22; it reads MRLRTALLATTLMAAAPVAANA. The region spanning 258–378 is the OmpA-like domain; it reads PPAPTPARTY…QNRRVEIILH (121 aa).

It is found in the cell outer membrane. In terms of biological role, growth enhancer. The chain is Outer membrane protein from Gluconacetobacter diazotrophicus (strain ATCC 49037 / DSM 5601 / CCUG 37298 / CIP 103539 / LMG 7603 / PAl5).